The following is a 1019-amino-acid chain: TOG array regulator of axonemal microtubules protein 2 (1019 aa).

4 disordered regions span residues 28-54 (AGPRVLPPGSINSSLPHGEGSLQPEPR), 131-158 (RRLSEGLAASSRASLDPGGGPQGVPLHS), 249-311 (TPSR…AKKP), and 991-1019 (SLGGSRKATDRGVAPDSKTTGSSYPFQLD). The span at 1007–1019 (SKTTGSSYPFQLD) shows a compositional bias: polar residues.

It belongs to the Crescerin family.

In Homo sapiens (Human), this protein is TOG array regulator of axonemal microtubules protein 2.